A 236-amino-acid chain; its full sequence is Ubiquinone biosynthesis O-methyltransferase (236 aa).

S-adenosyl-L-methionine is bound by residues Arg39, Gly59, Asp80, and Met124.

The protein belongs to the methyltransferase superfamily. UbiG/COQ3 family.

It catalyses the reaction a 3-demethylubiquinol + S-adenosyl-L-methionine = a ubiquinol + S-adenosyl-L-homocysteine + H(+). The enzyme catalyses a 3-(all-trans-polyprenyl)benzene-1,2-diol + S-adenosyl-L-methionine = a 2-methoxy-6-(all-trans-polyprenyl)phenol + S-adenosyl-L-homocysteine + H(+). It participates in cofactor biosynthesis; ubiquinone biosynthesis. In terms of biological role, O-methyltransferase that catalyzes the 2 O-methylation steps in the ubiquinone biosynthetic pathway. In Shewanella putrefaciens (strain CN-32 / ATCC BAA-453), this protein is Ubiquinone biosynthesis O-methyltransferase.